We begin with the raw amino-acid sequence, 388 residues long: Paired box protein Pax-5 (388 aa).

The segment at residues 15 to 141 is a DNA-binding region (paired); it reads RHGGVNQLGG…SSINRIIRTK (127 aa). The interval 18–74 is PAI subdomain; sequence GVNQLGGVFVNGRPLPDVVRQRIVELAHQGVRPCDISRQLRVSHGCVSKILGRYYET. Positions 93-141 are RED subdomain; sequence KVVDKIADYKRQNPTMFAWEIRDRLLAERVCDNDTVPSVSSINRIIRTK. Residues 143 to 158 are compositionally biased toward polar residues; the sequence is QQPTNQQIPPSNHSIA. 2 disordered regions span residues 143-162 and 191-217; these read QQPTNQQIPPSNHSIASTGS and AETNKRKRDEGIQESPIPNGHSLPGRD.

As to expression, first detected in mid-neurula embryos in the folding neural tube. With the completion of neurulation, expression becomes localized to the midbrain/hindbrain boundary (MHB) till at least stage 40. Expression is absent from regions adjacent to the MHB. In tailbuds, weakly and transiently expressed in the developing otic vesicle from stage 21 to stage 27.

The protein localises to the nucleus. In terms of biological role, probable transcription factor. This chain is Paired box protein Pax-5, found in Xenopus laevis (African clawed frog).